A 92-amino-acid chain; its full sequence is Putative septation protein SpoVG (92 aa).

This sequence belongs to the SpoVG family.

Its function is as follows. Could be involved in septation. The protein is Putative septation protein SpoVG of Clostridium botulinum (strain Eklund 17B / Type B).